A 367-amino-acid chain; its full sequence is Phosphoribosylaminoimidazole-succinocarboxamide synthase (367 aa).

The protein belongs to the SAICAR synthetase family.

It catalyses the reaction 5-amino-1-(5-phospho-D-ribosyl)imidazole-4-carboxylate + L-aspartate + ATP = (2S)-2-[5-amino-1-(5-phospho-beta-D-ribosyl)imidazole-4-carboxamido]succinate + ADP + phosphate + 2 H(+). Its pathway is purine metabolism; IMP biosynthesis via de novo pathway; 5-amino-1-(5-phospho-D-ribosyl)imidazole-4-carboxamide from 5-amino-1-(5-phospho-D-ribosyl)imidazole-4-carboxylate: step 1/2. The sequence is that of Phosphoribosylaminoimidazole-succinocarboxamide synthase from Shewanella baltica (strain OS223).